A 252-amino-acid chain; its full sequence is 5'-nucleotidase SurE (252 aa).

A divalent metal cation is bound by residues Asp8, Asp9, Ser39, and Asn95.

Belongs to the SurE nucleotidase family. A divalent metal cation serves as cofactor.

It is found in the cytoplasm. The catalysed reaction is a ribonucleoside 5'-phosphate + H2O = a ribonucleoside + phosphate. Functionally, nucleotidase that shows phosphatase activity on nucleoside 5'-monophosphates. The chain is 5'-nucleotidase SurE from Clostridium botulinum (strain 657 / Type Ba4).